Consider the following 837-residue polypeptide: Tuftelin-interacting protein 11 (837 aa).

2 stretches are compositionally biased toward basic and acidic residues: residues 1–13 (MSLS…GEGR) and 53–64 (VWAERDSDDERP). Disordered regions lie at residues 1 to 21 (MSLS…DDER), 53 to 72 (VWAE…KRAR), and 85 to 133 (LKKG…KGFA). A required for interaction with DHX15 region spans residues 1 to 50 (MSLSHLYRDGEGRIDDDDDERENFEITDWDLQNEFNPNRQRHWQTKEEAT). Residues S2, S59, and S98 each carry the phosphoserine modification. Acidic residues predominate over residues 91–102 (EEAELEDSDDEE). Positions 103–116 (KPVKQDDFPKDFGP) are enriched in basic and acidic residues. S144 is modified (phosphoserine). The G-patch domain occupies 149–195 (TKGIGQKLLQKMGYVPGRGLGKNAQGIINPIEAKQRKGKGAVGAYGS). Positions 179-236 (IEAKQRKGKGAVGAYGSERTTQSMQDFPVVDSEEEAEEEFQKELSQWRKDPSGSKKKP) are disordered. S210 carries the phosphoserine modification. Positions 217 to 231 (EFQKELSQWRKDPSG) are enriched in basic and acidic residues. Positions 700–705 (VKDKFN) match the Nuclear localization signal motif. The tract at residues 710 to 734 (IMNRAVSSNVGAYMQPGARENIAYL) is required for nuclear speckle localization.

The protein belongs to the TFP11/STIP family. Identified in the spliceosome C complex. Found in the Intron Large (IL) complex, a post-mRNA release spliceosomal complex containing the excised intron, U2, U5 and U6 snRNPs, and splicing factors. Interacts with TUFT1. Interacts with DHX15; indicative for a recruitment of DHX15 to the IL complex. Interacts with GCFC2.

Its subcellular location is the cytoplasm. The protein localises to the nucleus. Its function is as follows. Involved in pre-mRNA splicing, specifically in spliceosome disassembly during late-stage splicing events. Intron turnover seems to proceed through reactions in two lariat-intron associated complexes termed Intron Large (IL) and Intron Small (IS). In cooperation with DHX15 seems to mediate the transition of the U2, U5 and U6 snRNP-containing IL complex to the snRNP-free IS complex leading to efficient debranching and turnover of excised introns. May play a role in the differentiation of ameloblasts and odontoblasts or in the forming of the enamel extracellular matrix. This is Tuftelin-interacting protein 11 (TFIP11) from Pongo abelii (Sumatran orangutan).